Reading from the N-terminus, the 163-residue chain is Phosphopantetheine adenylyltransferase (163 aa).

Thr10 contacts substrate. Residues Thr10–Phe11 and His18 each bind ATP. Substrate-binding residues include Lys42, Leu74, and Arg88. ATP is bound by residues Gly89 to Arg91, Glu99, and Asn124 to Thr130.

Belongs to the bacterial CoaD family. Homohexamer. It depends on Mg(2+) as a cofactor.

It localises to the cytoplasm. The enzyme catalyses (R)-4'-phosphopantetheine + ATP + H(+) = 3'-dephospho-CoA + diphosphate. It participates in cofactor biosynthesis; coenzyme A biosynthesis; CoA from (R)-pantothenate: step 4/5. Its function is as follows. Reversibly transfers an adenylyl group from ATP to 4'-phosphopantetheine, yielding dephospho-CoA (dPCoA) and pyrophosphate. In Shewanella putrefaciens (strain CN-32 / ATCC BAA-453), this protein is Phosphopantetheine adenylyltransferase.